The primary structure comprises 183 residues: Translocon-associated protein subunit beta (183 aa).

Residues methionine 1–alanine 17 form the signal peptide. Residues glutamate 18–histidine 146 are Lumenal-facing. An N-linked (GlcNAc...) asparagine glycan is attached at asparagine 88. A helical membrane pass occupies residues phenylalanine 147 to leucine 167. The Cytoplasmic segment spans residues tryptophan 168–asparagine 183.

This sequence belongs to the TRAP-beta family. In terms of assembly, heterotetramer of TRAP-alpha, TRAP-beta, TRAP-delta and TRAP-gamma. Interacts with STING1.

It is found in the endoplasmic reticulum membrane. In terms of biological role, TRAP proteins are part of a complex whose function is to bind calcium to the ER membrane and thereby regulate the retention of ER resident proteins. This Bos taurus (Bovine) protein is Translocon-associated protein subunit beta (SSR2).